A 647-amino-acid polypeptide reads, in one-letter code: C2H2 finger domain transcription factor USV101 (647 aa).

Basic and acidic residues predominate over residues 1-10 (MSFVAPDDRA). The segment at 1–132 (MSFVAPDDRA…ATGYTPDGQP (132 aa)) is disordered. 2 stretches are compositionally biased toward polar residues: residues 27-54 (ESTS…SPNQ) and 66-84 (SSHS…STAY). Residues 97–122 (PTQQQQQQQSEQHIPSPPSSSNRPPS) are compositionally biased toward low complexity. 2 C2H2-type zinc fingers span residues 144–169 (FRCR…VRKH) and 175–197 (FPCH…ATVH). Positions 220-647 (QRASREQRRR…VKQQDDKKTQ (428 aa)) are disordered. The segment covering 222 to 248 (ASREQRRRGEVVEVPKGAVERRRETRK) has biased composition (basic and acidic residues). The span at 249–259 (AQAAAAQAAAA) shows a compositional bias: low complexity. Over residues 261 to 278 (GHSQQNSPYAQYHESQWN) the composition is skewed to polar residues. Composition is skewed to low complexity over residues 312-327 (SSSA…YDSA), 404-414 (HGAYPPHDAAA), and 421-434 (GYYH…GSYP). Positions 504-515 (RAEDDFGKDDRK) are enriched in basic and acidic residues. Residues 521–540 (SPSNSQVPDSSTAAHANGAH) are compositionally biased toward low complexity. A compositionally biased stretch (basic and acidic residues) spans 628–647 (VDKEREKKEEVKQQDDKKTQ).

It is found in the nucleus. Its subcellular location is the cytoplasm. Transcription factor that promotes pheromone gene expression, which results in a subsequent increase in cell fusion. Also promotes production of melanin and capsule and thereby is required for full virulence. This is C2H2 finger domain transcription factor USV101 from Cryptococcus neoformans var. grubii serotype A (strain H99 / ATCC 208821 / CBS 10515 / FGSC 9487) (Filobasidiella neoformans var. grubii).